The chain runs to 222 residues: Germin-like protein subfamily 1 member 13 (222 aa).

An N-terminal signal peptide occupies residues 1–18 (MRVSKSLILITLSALVIS). A disulfide bond links Cys32 and Cys49. The Cupin type-1 domain maps to 63–214 (SGLNQAGSTN…AFQLDVNIVE (152 aa)). Asn78 is a glycosylation site (N-linked (GlcNAc...) asparagine). Positions 111, 113, 118, and 160 each coordinate Mn(2+).

Belongs to the germin family. As to quaternary structure, oligomer (believed to be a pentamer but probably hexamer).

It is found in the secreted. Its subcellular location is the extracellular space. The protein resides in the apoplast. May play a role in plant defense. Probably has no oxalate oxidase activity even if the active site is conserved. The sequence is that of Germin-like protein subfamily 1 member 13 (GLP6) from Arabidopsis thaliana (Mouse-ear cress).